The chain runs to 206 residues: Small ribosomal subunit protein uS4 (206 aa).

Positions 96 to 156 constitute an S4 RNA-binding domain; the sequence is TRLDNVVYRM…EKSRTQARIK (61 aa).

The protein belongs to the universal ribosomal protein uS4 family. Part of the 30S ribosomal subunit. Contacts protein S5. The interaction surface between S4 and S5 is involved in control of translational fidelity.

One of the primary rRNA binding proteins, it binds directly to 16S rRNA where it nucleates assembly of the body of the 30S subunit. Its function is as follows. With S5 and S12 plays an important role in translational accuracy. The sequence is that of Small ribosomal subunit protein uS4 from Shewanella putrefaciens (strain CN-32 / ATCC BAA-453).